Consider the following 874-residue polypeptide: Lon protease (874 aa).

One can recognise a Lon N-terminal domain in the interval Leu18–Leu261. 3 disordered regions span residues Val47 to Ser68, Gly120 to Gly144, and Leu298 to Asp318. The span at Pro124–Gly142 shows a compositional bias: low complexity. Gly430 to Thr437 contributes to the ATP binding site. Residues Thr667–Pro851 form the Lon proteolytic domain. Active-site residues include Ser757 and Lys800. The disordered stretch occupies residues Phe853–Ala874.

This sequence belongs to the peptidase S16 family. As to quaternary structure, homohexamer. Organized in a ring with a central cavity.

The protein localises to the cytoplasm. The catalysed reaction is Hydrolysis of proteins in presence of ATP.. ATP-dependent serine protease that mediates the selective degradation of mutant and abnormal proteins as well as certain short-lived regulatory proteins. Required for cellular homeostasis and for survival from DNA damage and developmental changes induced by stress. Degrades polypeptides processively to yield small peptide fragments that are 5 to 10 amino acids long. Binds to DNA in a double-stranded, site-specific manner. The chain is Lon protease from Frankia alni (strain DSM 45986 / CECT 9034 / ACN14a).